A 140-amino-acid polypeptide reads, in one-letter code: Ribosome maturation factor RimP (140 aa).

Belongs to the RimP family.

The protein resides in the cytoplasm. Functionally, required for maturation of 30S ribosomal subunits. In Campylobacter fetus subsp. fetus (strain 82-40), this protein is Ribosome maturation factor RimP.